A 715-amino-acid chain; its full sequence is Fatty acid oxidation complex subunit alpha (715 aa).

The segment at 1–190 (MTTTSAFMLN…KAGLVDDVVP (190 aa)) is enoyl-CoA hydratase. A 3-hydroxyacyl-CoA dehydrogenase region spans residues 306–715 (GPLNSVGILG…WTNGETDQGN (410 aa)).

In the N-terminal section; belongs to the enoyl-CoA hydratase/isomerase family. This sequence in the central section; belongs to the 3-hydroxyacyl-CoA dehydrogenase family. In terms of assembly, heterotetramer of two alpha chains (FadJ) and two beta chains (FadI).

It localises to the cytoplasm. The catalysed reaction is a (3S)-3-hydroxyacyl-CoA = a (2E)-enoyl-CoA + H2O. The enzyme catalyses a 4-saturated-(3S)-3-hydroxyacyl-CoA = a (3E)-enoyl-CoA + H2O. It carries out the reaction a (3S)-3-hydroxyacyl-CoA + NAD(+) = a 3-oxoacyl-CoA + NADH + H(+). It catalyses the reaction (3S)-3-hydroxybutanoyl-CoA = (3R)-3-hydroxybutanoyl-CoA. It participates in lipid metabolism; fatty acid beta-oxidation. Catalyzes the formation of a hydroxyacyl-CoA by addition of water on enoyl-CoA. Also exhibits 3-hydroxyacyl-CoA epimerase and 3-hydroxyacyl-CoA dehydrogenase activities. This Salmonella gallinarum (strain 287/91 / NCTC 13346) protein is Fatty acid oxidation complex subunit alpha.